The following is a 327-amino-acid chain: GMP reductase (327 aa).

The active-site Thioimidate intermediate is the C175. 204 to 227 (IIADGGIRTHGDIAKSIRFGASMV) is an NADP(+) binding site.

Belongs to the IMPDH/GMPR family. GuaC type 2 subfamily.

It carries out the reaction IMP + NH4(+) + NADP(+) = GMP + NADPH + 2 H(+). Catalyzes the irreversible NADPH-dependent deamination of GMP to IMP. It functions in the conversion of nucleobase, nucleoside and nucleotide derivatives of G to A nucleotides, and in maintaining the intracellular balance of A and G nucleotides. The chain is GMP reductase from Oceanobacillus iheyensis (strain DSM 14371 / CIP 107618 / JCM 11309 / KCTC 3954 / HTE831).